The primary structure comprises 244 residues: Carboxy-S-adenosyl-L-methionine synthase (244 aa).

S-adenosyl-L-methionine-binding positions include Y40, G65 to S67, D90 to N91, N134, and R201.

Belongs to the class I-like SAM-binding methyltransferase superfamily. Cx-SAM synthase family. As to quaternary structure, homodimer.

It carries out the reaction prephenate + S-adenosyl-L-methionine = carboxy-S-adenosyl-L-methionine + 3-phenylpyruvate + H2O. In terms of biological role, catalyzes the conversion of S-adenosyl-L-methionine (SAM) to carboxy-S-adenosyl-L-methionine (Cx-SAM). This is Carboxy-S-adenosyl-L-methionine synthase from Citrifermentans bemidjiense (strain ATCC BAA-1014 / DSM 16622 / JCM 12645 / Bem) (Geobacter bemidjiensis).